The following is a 382-amino-acid chain: Alkanesulfonate monooxygenase (382 aa).

The protein belongs to the SsuD family. Homotetramer.

The catalysed reaction is an alkanesulfonate + FMNH2 + O2 = an aldehyde + FMN + sulfite + H2O + 2 H(+). In terms of biological role, catalyzes the desulfonation of aliphatic sulfonates. The chain is Alkanesulfonate monooxygenase from Yersinia pseudotuberculosis serotype IB (strain PB1/+).